The chain runs to 108 residues: MLTKILNNFKSINIRFFTRPGCSLCQSAKEIIYPAVEEDFPTNRFTIEEIDIDKENNKQYFDKFKNDVPVGMIDQKIIFKHRIDEDKLYYDLETILRQQIKKEKEEKE.

A disulfide bridge connects residues Cys22 and Cys25.

The protein belongs to the glutaredoxin family. YDR286C subfamily.

The protein is Glutaredoxin-like protein YDR286C homolog of Dictyostelium discoideum (Social amoeba).